A 780-amino-acid polypeptide reads, in one-letter code: Striatin (780 aa).

Residues 53 to 120 (LHFLQHEWAR…QERAKYHKLK (68 aa)) adopt a coiled-coil conformation. The caveolin-binding stretch occupies residues 55–63 (FLQHEWARF). The disordered stretch occupies residues 124 to 145 (ELNQGDMKPPSYDSDEGNETEV). S137 is subject to Phosphoserine. A calmodulin-binding region spans residues 149 to 166 (QNSQFMWKQGRQLLRQYL). The residue at position 225 (T225) is a Phosphothreonine. S227, S229, S245, and S259 each carry phosphoserine. 3 disordered regions span residues 290–321 (FLVA…TPER), 334–353 (EQYK…NRSK), and 363–388 (DVDE…LPEQ). Residues 299-315 (NESRSAGDGTDWEKEDQ) show a composition bias toward basic and acidic residues. The segment covering 338 to 351 (KERKGKKGVKRPNR) has biased composition (basic residues). WD repeat units lie at residues 461–500 (SHFD…PAKK), 514–553 (AHKG…VDPY), 567–606 (GHTD…PALT), 662–701 (SSSC…LIHS), 704–743 (AHLE…CIQE), and 750–780 (KFEE…KVFV).

This sequence belongs to the WD repeat striatin family. As to quaternary structure, part of the core of STRIPAK complexes composed of PP2A catalytic and scaffolding subunits, the striatins (PP2A regulatory subunits), the striatin-associated proteins MOB4, STRIP1 and STRIP2, PDCD10 and members of the STE20 kinases, such as STK24 and STK26. Interacts with CTTNBP2; this interaction may regulate dendritic spine distribution of STRN. Activation of glutamate receptors weakens the interaction with CTTNBP2. As to expression, mainly expressed in the central nervous system. Mostly confined in dendrites, not in axons, and is most abundant in dendritic spines.

Its subcellular location is the cytoplasm. It is found in the membrane. It localises to the cell projection. The protein localises to the dendritic spine. In terms of biological role, calmodulin-binding scaffolding protein which is the center of the striatin-interacting phosphatase and kinase (STRIPAK) complexes. STRIPAK complexes have critical roles in protein (de)phosphorylation and are regulators of multiple signaling pathways including Hippo, MAPK, nuclear receptor and cytoskeleton remodeling. Different types of STRIPAK complexes are involved in a variety of biological processes such as cell growth, differentiation, apoptosis, metabolism and immune regulation. The sequence is that of Striatin (Strn) from Rattus norvegicus (Rat).